Here is a 1353-residue protein sequence, read N- to C-terminus: MASPPHQQLLHHHSTEVSCDSSGDSNSVRVKINPKQLSSNSHPKHCKYSISSSCSSSGDSGGVPRRVGGGGRLRRQKKLPQLFERASSRWWDPKFDSVNLEEACLERCFPQTQRRFRYALFYIGFACLLWSIYFAVHMRSRLIVMVAPALCFLLVCVGFFLFTFTKLYARHYAWTSLALTLLVFALTLAAQFQVLTPVSGRGDSSNLTATARPTDTCLSQVGSFSMCIEVLFLLYTVMHLPLYLSLCLGVAYSVLFETFGYHFRDEACFPSPGAGALHWELLSRGLLHGCIHAIGVHLFVMSQVRSRSTFLKVGQSIMHGKDLEVEKALKERMIHSVMPRIIADDLMKQGDEESENSVKRHATSSPKNRKKKSSIQKAPIAFRPFKMQQIEEVSILFADIVGFTKMSANKSAHALVGLLNDLFGRFDRLCEETKCEKISTLGDCYYCVAGCPEPRADHAYCCIEMGLGMIKAIEQFCQEKKEMVNMRVGVHTGTVLCGILGMRRFKFDVWSNDVNLANLMEQLGVAGKVHISEATAKYLDDRYEMEDGKVIERLGQSVVADQLKGLKTYLISGQRAKESRCSCAEALLSGFEVIDGSQVSSGPRGQGTASSGNVSDLAQTVKTFDNLKTCPSCGITFAPKSEAGAEGGAPQNGCQDEHKNSTKASGGPNPKTQNGLLSPPQEEKLTNSQTSLCEILQEKGRWAGVSLDQSALLPLRFKNIREKTDAHFVDVIKEDSLMKDYFFKPPINQFSLNFLDQELERSYRTSYQEEVIKNSPVKTFASPTFSSLLDVFLSTTVFLTLSTTCFLKYEAATVPPPPAALAVFSAALLLEVLSLAVSIRMVFFLEDVMACTKRLLEWIAGWLPRHCIGAILVSLPALAVYSHVTSEYETNIHFPVFTGSAALIAVVHYCNFCQLSSWMRSSLATVVGAGPLLLLYVSLCPDSSVLTSPLDAVQNFSSERNPCNSSVPRDLRRPASLIGQEVVLVFFLLLLLVWFLNREFEVSYRLHYHGDVEADLHRTKIQSMRDQADWLLRNIIPYHVAEQLKVSQTYSKNHDSGGVIFASIVNFSEFYEENYEGGKECYRVLNELIGDFDELLSKPDYSSIEKIKTIGATYMAASGLNTAQAQDGSHPQEHLQILFEFAKEMMRVVDDFNNNMLWFNFKLRVGFNHGPLTAGVIGTTKLLYDIWGDTVNIASRMDTTGVECRIQVSEESYRVLSKMGYDFDYRGTVNVKGKGQMKTYLYPKCTDHRVIPQHQLSISPDIRVQVDGSIGRSPTDEIANLVPSVQYVDKTSLGSDSSTQAKDAHLSPKRPWKEPVKAEERGRFGKAIEKDDCDETGIEEANELTKLNVSKSV.

Disordered regions lie at residues 1–27 (MASP…DSNS) and 49–71 (SISS…GGGG). The Cytoplasmic portion of the chain corresponds to 1–117 (MASPPHQQLL…CFPQTQRRFR (117 aa)). Polar residues predominate over residues 16–27 (EVSCDSSGDSNS). The span at 49 to 66 (SISSSCSSSGDSGGVPRR) shows a compositional bias: low complexity. The chain crosses the membrane as a helical span at residues 118 to 138 (YALFYIGFACLLWSIYFAVHM). Residues 139–141 (RSR) lie on the Extracellular side of the membrane. The helical transmembrane segment at 142–162 (LIVMVAPALCFLLVCVGFFLF) threads the bilayer. At 163–171 (TFTKLYARH) the chain is on the cytoplasmic side. A helical transmembrane segment spans residues 172 to 192 (YAWTSLALTLLVFALTLAAQF). The Extracellular segment spans residues 193-215 (QVLTPVSGRGDSSNLTATARPTD). A glycan (N-linked (GlcNAc...) asparagine) is linked at Asn206. The helical transmembrane segment at 216 to 235 (TCLSQVGSFSMCIEVLFLLY) threads the bilayer. At 236–241 (TVMHLP) the chain is on the cytoplasmic side. Residues 242-259 (LYLSLCLGVAYSVLFETF) traverse the membrane as a helical segment. Residues 260–280 (GYHFRDEACFPSPGAGALHWE) are Extracellular-facing. A helical membrane pass occupies residues 281–301 (LLSRGLLHGCIHAIGVHLFVM). The Cytoplasmic portion of the chain corresponds to 302–786 (SQVRSRSTFL…VKTFASPTFS (485 aa)). The segment at 349 to 375 (QGDEESENSVKRHATSSPKNRKKKSSI) is disordered. A compositionally biased stretch (basic residues) spans 359-374 (KRHATSSPKNRKKKSS). The Guanylate cyclase 1 domain occupies 394 to 521 (SILFADIVGF…NDVNLANLME (128 aa)). Residues Asp399, Ile400, and Asp443 each coordinate Mg(2+). ATP is bound by residues 399–404 (DIVGFT), 441–443 (LGD), and Arg487. A Phosphoserine modification is found at Ser610. The segment at 642-684 (EAGAEGGAPQNGCQDEHKNSTKASGGPNPKTQNGLLSPPQEEK) is disordered. Residues Ser688, Ser691, and Ser706 each carry the phosphoserine modification. A helical transmembrane segment spans residues 787-807 (SLLDVFLSTTVFLTLSTTCFL). Topologically, residues 808 to 818 (KYEAATVPPPP) are extracellular. A helical membrane pass occupies residues 819-839 (AALAVFSAALLLEVLSLAVSI). Over 840–867 (RMVFFLEDVMACTKRLLEWIAGWLPRHC) the chain is Cytoplasmic. Residues 868–888 (IGAILVSLPALAVYSHVTSEY) traverse the membrane as a helical segment. Topologically, residues 889–891 (ETN) are extracellular. The chain crosses the membrane as a helical span at residues 892 to 912 (IHFPVFTGSAALIAVVHYCNF). Over 913-920 (CQLSSWMR) the chain is Cytoplasmic. A helical transmembrane segment spans residues 921-941 (SSLATVVGAGPLLLLYVSLCP). Residues 942 to 975 (DSSVLTSPLDAVQNFSSERNPCNSSVPRDLRRPA) are Extracellular-facing. N-linked (GlcNAc...) asparagine glycans are attached at residues Asn955 and Asn964. Residues 976–996 (SLIGQEVVLVFFLLLLLVWFL) traverse the membrane as a helical segment. The Cytoplasmic portion of the chain corresponds to 997–1353 (NREFEVSYRL…LTKLNVSKSV (357 aa)). The Guanylate cyclase 2 domain occupies 1058 to 1198 (GVIFASIVNF…DTVNIASRMD (141 aa)). ATP contacts are provided by residues Lys1108, 1185–1187 (DIW), 1192–1196 (NIASR), and Lys1232. Ser1257, Ser1259, Ser1295, and Ser1307 each carry phosphoserine. A compositionally biased stretch (polar residues) spans 1292–1301 (SLGSDSSTQA). Positions 1292–1326 (SLGSDSSTQAKDAHLSPKRPWKEPVKAEERGRFGK) are disordered. The span at 1302–1326 (KDAHLSPKRPWKEPVKAEERGRFGK) shows a compositional bias: basic and acidic residues.

It belongs to the adenylyl cyclase class-4/guanylyl cyclase family. Mg(2+) serves as cofactor. The cofactor is Mn(2+). In terms of tissue distribution, detected in skeletal muscle, pancreas, lung, heart, kidney, liver, brain and placenta. Expressed in multiple cells of the lung, with expression highest in airway smooth muscle.

Its subcellular location is the cell membrane. It carries out the reaction ATP = 3',5'-cyclic AMP + diphosphate. Insensitive to calcium/calmodulin, forskolin and somatostatin. Stimulated by beta-adrenergic receptor activation. Activity is down-regulated by calcium/calcineurin. Its function is as follows. Adenylyl cyclase that catalyzes the formation of the signaling molecule cAMP in response to activation of G protein-coupled receptors. Contributes to signaling cascades activated by CRH (corticotropin-releasing factor), corticosteroids and beta-adrenergic receptors. The sequence is that of Adenylate cyclase type 9 (ADCY9) from Homo sapiens (Human).